The following is a 599-amino-acid chain: Adenine deaminase (599 aa).

It belongs to the metallo-dependent hydrolases superfamily. Adenine deaminase family. Requires Mn(2+) as cofactor.

It carries out the reaction adenine + H2O + H(+) = hypoxanthine + NH4(+). The sequence is that of Adenine deaminase from Clostridium botulinum (strain 657 / Type Ba4).